Reading from the N-terminus, the 707-residue chain is Trans-feruloyl-CoA synthase FCS1 (707 aa).

ATP is bound by residues H267 and 524–535; that span reads ARAIGYPVVMKA. The ATP-grasp domain occupies 498 to 549; sequence KELLRPLGIAFPPSQFAANAEAAAAAARAIGYPVVMKAQAAALGHKSDAGGV.

The protein in the N-terminal section; belongs to the acetate CoA ligase alpha subunit family. This sequence in the C-terminal section; belongs to the acetate CoA ligase beta subunit family. As to quaternary structure, homodimer.

It catalyses the reaction (E)-ferulate + ATP + CoA = (E)-feruloyl-CoA + ADP + phosphate. In terms of biological role, catalyzes the formation of feruloyl-CoA, ADP and phosphate from ferulate, CoA and ATP. The sequence is that of Trans-feruloyl-CoA synthase FCS1 from Unknown prokaryotic organism.